Here is a 453-residue protein sequence, read N- to C-terminus: uncharacterized protein (453 aa).

Disordered regions lie at residues 183 to 210 (GNGR…RSLS) and 428 to 453 (PDSM…QYSK). Residues 198–207 (TKAHNYKTRR) are compositionally biased toward basic residues. The segment covering 433-453 (HPPTFSKNNTSSNPKSHQYSK) has biased composition (polar residues).

This is an uncharacterized protein from Saccharomyces cerevisiae (strain ATCC 204508 / S288c) (Baker's yeast).